The chain runs to 464 residues: tRNA modification GTPase MnmE (464 aa).

(6S)-5-formyl-5,6,7,8-tetrahydrofolate-binding residues include arginine 25, glutamate 87, and lysine 130. The region spanning 226–386 (GLSVVLAGQP…LRAELLRIAG (161 aa)) is the TrmE-type G domain. Asparagine 236 is a K(+) binding site. GTP-binding positions include 236–241 (NVGKSS), 255–261 (TPIAGTT), and 280–283 (DTAG). Serine 240 contributes to the Mg(2+) binding site. K(+) contacts are provided by threonine 255, isoleucine 257, and threonine 260. Threonine 261 serves as a coordination point for Mg(2+). Residue lysine 464 participates in (6S)-5-formyl-5,6,7,8-tetrahydrofolate binding.

This sequence belongs to the TRAFAC class TrmE-Era-EngA-EngB-Septin-like GTPase superfamily. TrmE GTPase family. In terms of assembly, homodimer. Heterotetramer of two MnmE and two MnmG subunits. The cofactor is K(+).

It is found in the cytoplasm. Its function is as follows. Exhibits a very high intrinsic GTPase hydrolysis rate. Involved in the addition of a carboxymethylaminomethyl (cmnm) group at the wobble position (U34) of certain tRNAs, forming tRNA-cmnm(5)s(2)U34. The chain is tRNA modification GTPase MnmE from Burkholderia orbicola (strain AU 1054).